Reading from the N-terminus, the 320-residue chain is Foldase protein PrsA (320 aa).

The first 20 residues, 1–20 (MKMINKLIVPVTASALLLGA), serve as a signal peptide directing secretion. Cysteine 21 carries the N-palmitoyl cysteine lipid modification. Residue cysteine 21 is the site of S-diacylglycerol cysteine attachment. One can recognise a PpiC domain in the interval 139–245 (EDSKKASHIL…FGYHIIKADK (107 aa)). The disordered stretch occupies residues 159–198 (EGLDDKEAKQKAEEIQKEVSKDPSKFGEIAKKESMDTGSA).

Belongs to the PrsA family.

The protein localises to the cell membrane. The enzyme catalyses [protein]-peptidylproline (omega=180) = [protein]-peptidylproline (omega=0). Its function is as follows. Plays a major role in protein secretion by helping the post-translocational extracellular folding of several secreted proteins. This chain is Foldase protein PrsA, found in Staphylococcus aureus (strain MRSA252).